Reading from the N-terminus, the 370-residue chain is Psilocybin cluster transcription regulator (370 aa).

Disordered stretches follow at residues 1-39 (MAPT…ADIS) and 102-221 (YQTG…RRRR). Over residues 143–152 (IQHQDQQQSG) the composition is skewed to polar residues. Low complexity predominate over residues 183 to 202 (TSTSTPSGGRRGGRSATMGS). Residues 204-218 (EWSRQRKDNHKEVER) are compositionally biased toward basic and acidic residues. The basic motif stretch occupies residues 208–221 (QRKDNHKEVERRRR). Positions 208-258 (QRKDNHKEVERRRRGNINEGINELGRIVPSGSGEKAKGAILSRAVQYIHHL) constitute a bHLH domain. Positions 222–258 (GNINEGINELGRIVPSGSGEKAKGAILSRAVQYIHHL) are helix-loop-helix motif. A disordered region spans residues 317–370 (VSTAGAGSGAAKDESAAGTKRRSTDGADAAGTNVEGGNNDNAEGERDGKRQRTE). Residues 359–370 (EGERDGKRQRTE) are compositionally biased toward basic and acidic residues.

The protein localises to the nucleus. Its function is as follows. Transcription factor that may regulate the expression of the gene cluster that mediates the biosynthesis of psilocybin, a psychotropic tryptamine-derived natural product. The protein is Psilocybin cluster transcription regulator of Psilocybe cyanescens.